The primary structure comprises 419 residues: UDP-N-acetylglucosamine 1-carboxyvinyltransferase (419 aa).

22–23 (KN) is a phosphoenolpyruvate binding site. Arg93 contacts UDP-N-acetyl-alpha-D-glucosamine. Cys117 functions as the Proton donor in the catalytic mechanism. Cys117 carries the 2-(S-cysteinyl)pyruvic acid O-phosphothioketal modification. UDP-N-acetyl-alpha-D-glucosamine contacts are provided by Asp306 and Ile328.

This sequence belongs to the EPSP synthase family. MurA subfamily.

The protein localises to the cytoplasm. The enzyme catalyses phosphoenolpyruvate + UDP-N-acetyl-alpha-D-glucosamine = UDP-N-acetyl-3-O-(1-carboxyvinyl)-alpha-D-glucosamine + phosphate. It participates in cell wall biogenesis; peptidoglycan biosynthesis. Functionally, cell wall formation. Adds enolpyruvyl to UDP-N-acetylglucosamine. In Magnetococcus marinus (strain ATCC BAA-1437 / JCM 17883 / MC-1), this protein is UDP-N-acetylglucosamine 1-carboxyvinyltransferase.